A 275-amino-acid chain; its full sequence is Probable dual specificity protein phosphatase DDB_G0271350 (275 aa).

The Tyrosine-protein phosphatase domain maps to Gly-2–Asn-143. The active-site Phosphocysteine intermediate is Cys-87.

It belongs to the protein-tyrosine phosphatase family. Non-receptor class dual specificity subfamily.

It catalyses the reaction O-phospho-L-tyrosyl-[protein] + H2O = L-tyrosyl-[protein] + phosphate. The enzyme catalyses O-phospho-L-seryl-[protein] + H2O = L-seryl-[protein] + phosphate. It carries out the reaction O-phospho-L-threonyl-[protein] + H2O = L-threonyl-[protein] + phosphate. Its function is as follows. Has a dual specificity toward Ser/Thr and Tyr-containing proteins. This Dictyostelium discoideum (Social amoeba) protein is Probable dual specificity protein phosphatase DDB_G0271350.